The chain runs to 327 residues: Probable cell division protein WhiA (327 aa).

The segment at residues 275–308 (SLEELGRLADPPMTKDAVAGRIRRLLSMADRKAK) is a DNA-binding region (H-T-H motif).

This sequence belongs to the WhiA family.

In terms of biological role, involved in cell division and chromosome segregation. In Mycobacterium avium (strain 104), this protein is Probable cell division protein WhiA.